A 334-amino-acid chain; its full sequence is Small ribosomal subunit protein RACK1z (334 aa).

WD repeat units follow at residues 16–47 (GHNDVVTAIATPIDNSPFIVSSSRDKSLLVWD), 73–103 (GHSHFVQDVVLSSDGQFALSGSWDGELRLWD), 115–145 (GHDKDVLSVAFSVDNRQIVSASRDRTIKLWN), 163–195 (GHNGWVSCVRFSPNTFQPTIVSGSWDRTVKVWN), 207–237 (GHGGYVNAVAVSPDGSLCASGGKDGVTLLWD), 248–277 (DAGSIIHSLCFSPNRYWLCAATQDSIKIWD), and 296–326 (NQMLYCTSLNWSADGSTLYAGYTDGTIRIYK).

Belongs to the WD repeat G protein beta family. Ribosomal protein RACK1 subfamily. Interacts with RAC1, RAC3, RAC6, RAR1, SGT1 and RBOHB. Homodimer and heterodimer with RACK1B. In terms of tissue distribution, widely expressed.

The protein resides in the cytoplasm. It localises to the cell membrane. Its function is as follows. Component of the RACK1 regulatory proteins that functions in innate immunity by interacting with multiple proteins in the RAC1 immune complex. Acts as a positive regulator of reactive oxygen species (ROS) production and is required for resistance against rice blast (M.grisea) infection. The sequence is that of Small ribosomal subunit protein RACK1z (RACK1A) from Oryza sativa subsp. japonica (Rice).